The sequence spans 327 residues: Vacuolar protein sorting-associated protein 26A (327 aa).

The segment at R306–M327 is disordered. S315 carries the post-translational modification Phosphoserine. The segment covering P316–M327 has biased composition (polar residues).

This sequence belongs to the VPS26 family. As to quaternary structure, component of the heterotrimeric retromer cargo-selective complex (CSC), also described as vacuolar protein sorting subcomplex (VPS), formed by VPS26 (VPS26A or VPS26B), VPS29 and VPS35. The CSC has a highly elongated structure with VPS26 and VPS29 binding independently at opposite distal ends of VPS35 as central platform. The CSC is believed to associate with variable sorting nexins to form functionally distinct retromer complex variants. The originally described retromer complex (also called SNX-BAR retromer) is a pentamer containing the CSC and a heterodimeric membrane-deforming subcomplex formed between SNX1 or SNX2 and SNX5 or SNX6 (also called SNX-BAR subcomplex); the respective CSC and SNX-BAR subcomplexes associate with low affinity. The CSC associates with SNX3 to form a SNX3-retromer complex. The CSC associates with SNX27, the WASH complex and the SNX-BAR subcomplex to form the SNX27-retromer complex. Interacts with VPS29, VPS35, SNX1, SNX2, SNX5, SNX6, SNX3, SNX27, RAB7A, ECPAS, EHD1, WASHC5, SORL1.

The protein resides in the cytoplasm. Its subcellular location is the endosome membrane. It is found in the early endosome. Its function is as follows. Acts as a component of the retromer cargo-selective complex (CSC). The CSC is believed to be the core functional component of retromer or respective retromer complex variants acting to prevent missorting of selected transmembrane cargo proteins into the lysosomal degradation pathway. The recruitment of the CSC to the endosomal membrane involves RAB7A and SNX3. The SNX-BAR retromer mediates retrograde transport of cargo proteins from endosomes to the trans-Golgi network (TGN) and is involved in endosome-to-plasma membrane transport for cargo protein recycling. The SNX3-retromer mediates the retrograde endosome-to-TGN transport of WLS distinct from the SNX-BAR retromer pathway. The SNX27-retromer is believed to be involved in endosome-to-plasma membrane trafficking and recycling of a broad spectrum of cargo proteins. The CSC seems to act as recruitment hub for other proteins, such as the WASH complex and TBC1D5. Required for retrograde transport of lysosomal enzyme receptor IGF2R. Required to regulate transcytosis of the polymeric immunoglobulin receptor (pIgR-pIgA). Required for the endosomal localization of WASHC2A (indicative for the WASH complex). Required for the endosomal localization of TBC1D5. Mediates retromer cargo recognition of SORL1 and is involved in trafficking of SORL1 implicated in sorting and processing of APP. Involved in retromer-independent lysosomal sorting of F2R. Involved in recycling of ADRB2. Enhances the affinity of SNX27 for PDZ-binding motifs in cargo proteins. The sequence is that of Vacuolar protein sorting-associated protein 26A from Homo sapiens (Human).